Here is a 158-residue protein sequence, read N- to C-terminus: MKTPLVTREGYEKLKQELNYLWREERPEVTKKVTWAASLGDRSENADYQYNKKRLREIDRRVRYLTKCMENLKIVDYSPQQEGKVFFGAWVEIENDDGVTHRFRIVGYDEIFGRKDYISIDSPMARALLKKEVGDLAVVNTPAGEASWYVNAIEYVKP.

The protein belongs to the GreA/GreB family. GreB subfamily.

In terms of biological role, necessary for efficient RNA polymerase transcription elongation past template-encoded arresting sites. The arresting sites in DNA have the property of trapping a certain fraction of elongating RNA polymerases that pass through, resulting in locked ternary complexes. Cleavage of the nascent transcript by cleavage factors such as GreA or GreB allows the resumption of elongation from the new 3'terminus. GreB releases sequences of up to 9 nucleotides in length. The sequence is that of Transcription elongation factor GreB from Escherichia coli O157:H7.